The sequence spans 395 residues: Acid ceramidase (395 aa).

The signal sequence occupies residues methionine 1–valine 20. The cysteines at positions 31 and 340 are disulfide-linked. The active-site Nucleophile is the cysteine 143. 4 N-linked (GlcNAc...) asparagine glycosylation sites follow: asparagine 195, asparagine 259, asparagine 286, and asparagine 342. Residues cysteine 388 and cysteine 392 are joined by a disulfide bond.

Belongs to the acid ceramidase family. In terms of assembly, heterodimer; disulfide-linked. The heterodimer is composed of the disulfide-linked alpha and beta chains produced by autocatalytic cleavage of the precursor. Post-translationally, N-glycosylated. Proteolytically cleaved into two chains alpha and beta that remain associated via a disulfide bond. Cleavage gives rise to a conformation change that activates the enzyme. The same catalytic Cys residue mediates the autoproteolytic cleavage and subsequent hydrolysis of lipid substrates. The beta chain may undergo an additional C-terminal processing.

It is found in the lysosome. Its subcellular location is the secreted. It carries out the reaction an N-acylsphing-4-enine + H2O = sphing-4-enine + a fatty acid. The enzyme catalyses N-dodecanoylsphing-4-enine + H2O = dodecanoate + sphing-4-enine. The catalysed reaction is N-tetradecanoylsphing-4-enine + H2O = tetradecanoate + sphing-4-enine. It catalyses the reaction N-hexadecanoylsphing-4-enine + H2O = sphing-4-enine + hexadecanoate. It carries out the reaction N-octadecanoylsphing-4-enine + H2O = sphing-4-enine + octadecanoate. The enzyme catalyses N-dodecanoyl-(4R)-hydroxysphinganine + H2O = (4R)-hydroxysphinganine + dodecanoate. The catalysed reaction is N-(dodecanoyl)-sphinganine + H2O = dodecanoate + sphinganine. It catalyses the reaction N-(acetyl)-sphing-4-enine + H2O = sphing-4-enine + acetate. It carries out the reaction N-(hexanoyl)sphing-4-enine + H2O = hexanoate + sphing-4-enine. The enzyme catalyses N-octanoylsphing-4-enine + H2O = octanoate + sphing-4-enine. The catalysed reaction is N-(9Z-octadecenoyl)-sphing-4-enine + H2O = sphing-4-enine + (9Z)-octadecenoate. It catalyses the reaction N-dodecanoylethanolamine + H2O = dodecanoate + ethanolamine. Its pathway is lipid metabolism; sphingolipid metabolism. Functionally, lysosomal ceramidase that hydrolyzes sphingolipid ceramides into sphingosine and free fatty acids at acidic pH. Ceramides, sphingosine, and its phosphorylated form sphingosine-1-phosphate are bioactive lipids that mediate cellular signaling pathways regulating several biological processes including cell proliferation, apoptosis and differentiation. Has a higher catalytic efficiency towards C12-ceramides versus other ceramides. Also catalyzes the reverse reaction allowing the synthesis of ceramides from fatty acids and sphingosine. For the reverse synthetic reaction, the natural sphingosine D-erythro isomer is more efficiently utilized as a substrate compared to D-erythro-dihydrosphingosine and D-erythro-phytosphingosine, while the fatty acids with chain lengths of 12 or 14 carbons are the most efficiently used. Also has an N-acylethanolamine hydrolase activity. By regulating the levels of ceramides, sphingosine and sphingosine-1-phosphate in the epidermis, mediates the calcium-induced differentiation of epidermal keratinocytes. Also indirectly regulates tumor necrosis factor/TNF-induced apoptosis. By regulating the intracellular balance between ceramides and sphingosine, in adrenocortical cells, probably also acts as a regulator of steroidogenesis. The protein is Acid ceramidase of Bos taurus (Bovine).